The sequence spans 308 residues: 4-hydroxy-tetrahydrodipicolinate synthase (308 aa).

Threonine 56 is a pyruvate binding site. Tyrosine 144 functions as the Proton donor/acceptor in the catalytic mechanism. The Schiff-base intermediate with substrate role is filled by lysine 172. Residue valine 212 participates in pyruvate binding.

The protein belongs to the DapA family. As to quaternary structure, homotetramer; dimer of dimers.

Its subcellular location is the cytoplasm. It catalyses the reaction L-aspartate 4-semialdehyde + pyruvate = (2S,4S)-4-hydroxy-2,3,4,5-tetrahydrodipicolinate + H2O + H(+). It functions in the pathway amino-acid biosynthesis; L-lysine biosynthesis via DAP pathway; (S)-tetrahydrodipicolinate from L-aspartate: step 3/4. Its function is as follows. Catalyzes the condensation of (S)-aspartate-beta-semialdehyde [(S)-ASA] and pyruvate to 4-hydroxy-tetrahydrodipicolinate (HTPA). In Kineococcus radiotolerans (strain ATCC BAA-149 / DSM 14245 / SRS30216), this protein is 4-hydroxy-tetrahydrodipicolinate synthase.